The following is a 320-amino-acid chain: Beta-ketoacyl-[acyl-carrier-protein] synthase III (320 aa).

Active-site residues include Cys-114 and His-247. The interval 248 to 252 (QANRR) is ACP-binding. Asn-277 is an active-site residue.

The protein belongs to the thiolase-like superfamily. FabH family. In terms of assembly, homodimer.

It is found in the cytoplasm. It carries out the reaction malonyl-[ACP] + acetyl-CoA + H(+) = 3-oxobutanoyl-[ACP] + CO2 + CoA. It functions in the pathway lipid metabolism; fatty acid biosynthesis. In terms of biological role, catalyzes the condensation reaction of fatty acid synthesis by the addition to an acyl acceptor of two carbons from malonyl-ACP. Catalyzes the first condensation reaction which initiates fatty acid synthesis and may therefore play a role in governing the total rate of fatty acid production. Possesses both acetoacetyl-ACP synthase and acetyl transacylase activities. Its substrate specificity determines the biosynthesis of branched-chain and/or straight-chain of fatty acids. The polypeptide is Beta-ketoacyl-[acyl-carrier-protein] synthase III (Neisseria meningitidis serogroup B (strain ATCC BAA-335 / MC58)).